Here is a 298-residue protein sequence, read N- to C-terminus: MSIDAIIIGGPTASGKTEIAHELAKLLNTEIISADSMCVYKFMNIGTAKPSLEKRKEIKYHMIDVVLPNEYFDTYIYVEKAKSIIKQIKEKGKIPIIVGGTYLYIQALLYGLPETSEPDFRLRKKLESIANKKGLHFLYEKLKVIDKVYAEKIGKNDKKRIIRALEIFINTGKPFSSFHKWHEPTMKVLGFYTNLTQEELNKNIEKRTYYMIEQGLEVECINLLCLGYKEAMTSSQAIGYKEMIPYIEGKSSLKEAIENIIKNTKEYASRQRRWFQKTTFTPIRTIEDIKHHLQSLVL.

10–17 (GPTASGKT) is a binding site for ATP. 12–17 (TASGKT) provides a ligand contact to substrate. Residues 35–38 (DSMC) are interaction with substrate tRNA.

It belongs to the IPP transferase family. In terms of assembly, monomer. Requires Mg(2+) as cofactor.

It catalyses the reaction adenosine(37) in tRNA + dimethylallyl diphosphate = N(6)-dimethylallyladenosine(37) in tRNA + diphosphate. Its function is as follows. Catalyzes the transfer of a dimethylallyl group onto the adenine at position 37 in tRNAs that read codons beginning with uridine, leading to the formation of N6-(dimethylallyl)adenosine (i(6)A). The protein is tRNA dimethylallyltransferase of Hydrogenobaculum sp. (strain Y04AAS1).